The following is a 185-amino-acid chain: Ribosome-recycling factor (185 aa).

Positions asparagine 137 to glutamate 158 are disordered. Residues lysine 140–glutamate 158 are compositionally biased toward basic and acidic residues.

This sequence belongs to the RRF family.

The protein resides in the cytoplasm. Functionally, responsible for the release of ribosomes from messenger RNA at the termination of protein biosynthesis. May increase the efficiency of translation by recycling ribosomes from one round of translation to another. The protein is Ribosome-recycling factor of Helicobacter pylori (strain P12).